We begin with the raw amino-acid sequence, 976 residues long: Terminal uridylyltransferase 1 (976 aa).

Disordered stretches follow at residues 1-47 (MVSK…DADF) and 129-185 (TGRS…TTEG). A required for oligomerization and may contribute to the incorporation into the MPsome complex region spans residues 1–188 (MVSKYHRLLQ…EDDTTEGPRG (188 aa)). Residues 147-183 (ADDESDGNLDTDGSDASEGDEVESTTDADVYGEDDTT) are compositionally biased toward acidic residues. The C2H2-type; atypical zinc-finger motif lies at 190 to 221 (VRLYSCDACPHAVFTTHAALLAHAEEHHADLL). Zn(2+) contacts are provided by Cys-195, Cys-198, His-212, and His-217. UTP-binding positions include Ser-298 and 309 to 312 (ADID). Mg(2+) contacts are provided by Asp-310 and Asp-312. Arg-358 is an RNA binding site. In terms of domain architecture, PAP-associated spans 366 to 425 (ASSPILTVARRDAEDVVARSIRFILNGPATREDRLLLEGSVRDAVGPTGVQQVWWNRTSD). UTP contacts are provided by residues 480–484 (GIRNS), Lys-505, Lys-509, and 523–524 (SY). Positions 652–661 (IEDPYEENLN) match the Nucleotide recognition motif (NRM) motif. The important for catalytic activity and RNA binding stretch occupies residues 700-976 (DSSGTPAAGG…SKVTPFKSPR (277 aa)). Residues 732-755 (SESRRLPQSNSDNSGRIANGDNES) form a disordered region.

The protein belongs to the DNA polymerase type-B-like family. In terms of assembly, oligomer. Component of the mitochondrial 3' processome (MPsome) complex composed at least of terminal uridylyltransferase KRET1/TUT1, 3'-5' exonuclease DSS1, MPSS1, MPSS2 and MPSS3. Within the complex, interacts with DSS1, MPSS1 and MPSS3. Requires Mg(2+) as cofactor. The cofactor is Mn(2+).

It localises to the mitochondrion. It carries out the reaction RNA(n) + UTP = RNA(n)-3'-uridine ribonucleotide + diphosphate. Terminal uridylyltransferase which is involved in the post-transcriptional editing of mitochondrial RNA, a process involving the addition and deletion of uridine (U) nucleotides in the pre-RNA. Specifically, catalyzes the addition of Us to the 3'-hydroxyl group of guided RNA (gRNA), ribosomal RNA (rRNA) and some mRNAs. As part of the mitochondrial 3' processome (MPsome), catalyzes the primary 3' uridylation of gRNA precursors to facilitate their recognition and to induce their processive 3'-5' degradation by DSS1, and the secondary 3' uridylation of mature gRNAs. Involved in the 3' uridylylation of the long A/U tail of some edited and never-edited mRNAs. Promotes 3' uridylylation-mediated decay of some never-edited mRNAs. Does not mediate RNA-independent UTP polymerization. The chain is Terminal uridylyltransferase 1 from Trypanosoma brucei brucei.